Consider the following 687-residue polypeptide: Protein-glutamine gamma-glutamyltransferase 2 (687 aa).

Residue alanine 2 is modified to N-acetylalanine. Serine 60 carries the phosphoserine modification. 2 disulfide bridges follow: cysteine 230–cysteine 370 and cysteine 370–cysteine 371. Active-site residues include cysteine 277, histidine 335, and aspartate 358. 5 residues coordinate Ca(2+): asparagine 398, aspartate 400, glutamate 437, glutamate 447, and glutamate 452. Lysine 468 carries the post-translational modification N6-acetyllysine. 476-483 (RIRVGQSM) contributes to the GTP binding site. Glutamate 539 contacts Ca(2+). A GTP-binding site is contributed by 580–583 (RDLY). Glutamine 633 participates in a covalent cross-link: Isoglutamyl lysine isopeptide (Gln-Lys) (interchain with K-?).

Belongs to the transglutaminase superfamily. Transglutaminase family. In terms of assembly, monomer. Interacts with phospholipase C; promoting alpha-1 adrenergic receptor signaling. Interacts with PLCD1. As to quaternary structure, homooligomer. It depends on Ca(2+) as a cofactor. In terms of processing, disulfide bond formation inactivates the calcium-dependent acyltransferase activity. Cys-370 can form disulfide bonds with both Cys-230 and Cys-371: formation of a disulfide bond between Cys-230 and Cys-370 facilitates formation of the disulfide between Cys-370 and Cys-371, which promotes inactivation of the acyltransferase activity. May also form interchain disulfids between Cys-230 and Cys-370. Ca(2+) protects against disulfide bond formation and inactivation. Auto-transglutaminated: Forms covalent cross-links mediated by transglutaminase between Gln-633 and the epsilon-amino group of a lysine residue of itself or HMGB1, forming homopolymers and heteropolymers, respectively. Post-translationally, S-nitrosylated, leading to inactivation of the acyltransferase activity.

The protein localises to the cytoplasm. It is found in the cytosol. The protein resides in the nucleus. Its subcellular location is the chromosome. It localises to the secreted. The protein localises to the extracellular space. It is found in the extracellular matrix. The protein resides in the cell membrane. Its subcellular location is the mitochondrion. It localises to the perinuclear region. The enzyme catalyses L-glutaminyl-[protein] + L-lysyl-[protein] = [protein]-L-lysyl-N(6)-5-L-glutamyl-[protein] + NH4(+). It carries out the reaction L-glutaminyl-[protein] + serotonin = 5-serotonyl-L-glutamyl-[protein] + NH4(+). It catalyses the reaction L-glutaminyl-[protein] + dopamine = 5-dopaminyl-L-glutamyl-[protein] + NH4(+). The catalysed reaction is L-glutaminyl-[protein] + histamine = 5-histaminyl-L-glutamyl-[protein] + NH4(+). The enzyme catalyses L-glutaminyl-[protein] + (R)-noradrenaline = 5-(R)-noradrenalinyl-L-glutamyl-[protein] + NH4(+). It carries out the reaction L-glutaminyl-[protein] + H2O = L-glutamyl-[protein] + NH4(+). With respect to regulation, acyltransferase activity is regulated by the binding of GTP and Ca(2+): inactivated by GTP, which stabilizes its closed structure, thereby obstructing the accessibility of substrates to the active sites. In contrast, Ca(2+) acts as a cofactor by inducing conformational change to the active open form. In absence of Ca(2+), Mg(2+) may bind Ca(2+)-binding sites, promoting GTP-binding and subsequent inhibition of the acyltransferase activity. Extracellularly reduced and activated by CLIC3. Specifically inhibited by compound VA4 ((S)-Benzyl (6-Acrylamido-1-(4-((5-(dimethylamino)naphthalen-1-yl)sulfonyl)piperazin-1-yl)-1-oxohexan-2-yl)carbamate), which specifically abolishes both the transamidation and GTP-binding activities. Calcium-dependent acyltransferase that catalyzes the formation of covalent bonds between peptide-bound glutamine and various primary amines, such as gamma-amino group of peptide-bound lysine, or mono- and polyamines, thereby producing cross-linked or aminated proteins, respectively. Involved in many biological processes, such as bone development, angiogenesis, wound healing, cellular differentiation, chromatin modification and apoptosis. Acts as a protein-glutamine gamma-glutamyltransferase by mediating the cross-linking of proteins, such as ACO2, HSPB6, FN1, HMGB1, RAP1GDS1, SLC25A4/ANT1, SPP1 and WDR54. Under physiological conditions, the protein cross-linking activity is inhibited by GTP; inhibition is relieved by Ca(2+) in response to various stresses. When secreted, catalyzes cross-linking of proteins of the extracellular matrix, such as FN1 and SPP1 resulting in the formation of scaffolds. Plays a key role during apoptosis, both by (1) promoting the cross-linking of cytoskeletal proteins resulting in condensation of the cytoplasm, and by (2) mediating cross-linking proteins of the extracellular matrix, resulting in the irreversible formation of scaffolds that stabilize the integrity of the dying cells before their clearance by phagocytosis, thereby preventing the leakage of harmful intracellular components. In addition to protein cross-linking, can use different monoamine substrates to catalyze a vast array of protein post-translational modifications: mediates aminylation of serotonin, dopamine, noradrenaline or histamine into glutamine residues of target proteins to generate protein serotonylation, dopaminylation, noradrenalinylation or histaminylation, respectively. Mediates protein serotonylation of small GTPases during activation and aggregation of platelets, leading to constitutive activation of these GTPases. Plays a key role in chromatin organization by mediating serotonylation and dopaminylation of histone H3. Catalyzes serotonylation of 'Gln-5' of histone H3 (H3Q5ser) during serotonergic neuron differentiation, thereby facilitating transcription. Acts as a mediator of neurotransmission-independent role of nuclear dopamine in ventral tegmental area (VTA) neurons: catalyzes dopaminylation of 'Gln-5' of histone H3 (H3Q5dop), thereby regulating relapse-related transcriptional plasticity in the reward system. Regulates vein remodeling by mediating serotonylation and subsequent inactivation of ATP2A2/SERCA2. Also acts as a protein deamidase by mediating the side chain deamidation of specific glutamine residues of proteins to glutamate. Catalyzes specific deamidation of protein gliadin, a component of wheat gluten in the diet. May also act as an isopeptidase cleaving the previously formed cross-links. Also able to participate in signaling pathways independently of its acyltransferase activity: acts as a signal transducer in alpha-1 adrenergic receptor-mediated stimulation of phospholipase C-delta (PLCD) activity and is required for coupling alpha-1 adrenergic agonists to the stimulation of phosphoinositide lipid metabolism. Its function is as follows. Has cytotoxic activity: is able to induce apoptosis independently of its acyltransferase activity. This chain is Protein-glutamine gamma-glutamyltransferase 2, found in Homo sapiens (Human).